The chain runs to 66 residues: MSVITCGGCPGRLGLNQIKQLIGKNGAEVVHFATCMTAFKPKCRYAEKMKEEIEKMGAKVVMSSHF.

This sequence to M.jannaschii MJ0582.

This is an uncharacterized protein from Methanocaldococcus jannaschii (strain ATCC 43067 / DSM 2661 / JAL-1 / JCM 10045 / NBRC 100440) (Methanococcus jannaschii).